Consider the following 600-residue polypeptide: Long-chain-fatty-acid--CoA ligase FadD15 (600 aa).

It belongs to the ATP-dependent AMP-binding enzyme family.

The enzyme catalyses a long-chain fatty acid + ATP + CoA = a long-chain fatty acyl-CoA + AMP + diphosphate. The catalysed reaction is dodecanoate + ATP + CoA = dodecanoyl-CoA + AMP + diphosphate. It catalyses the reaction hexadecanoate + ATP + CoA = hexadecanoyl-CoA + AMP + diphosphate. The protein operates within lipid metabolism; fatty acid biosynthesis. Functionally, catalyzes the activation of long-chain fatty acids as acyl-coenzyme A (acyl-CoA), which are then transferred to the multifunctional polyketide synthase (PKS) type III for further chain extension. The polypeptide is Long-chain-fatty-acid--CoA ligase FadD15 (fadD15) (Mycobacterium tuberculosis (strain ATCC 25618 / H37Rv)).